The primary structure comprises 258 residues: Glucose 1-dehydrogenase 2 (258 aa).

11-35 contacts NADP(+); it reads IVTGSSKGIGKAIAERFGKEKMNVV. S146 provides a ligand contact to substrate. The active-site Proton acceptor is Y159.

This sequence belongs to the short-chain dehydrogenases/reductases (SDR) family. In terms of assembly, homotetramer.

It catalyses the reaction D-glucose + NAD(+) = D-glucono-1,5-lactone + NADH + H(+). The catalysed reaction is D-glucose + NADP(+) = D-glucono-1,5-lactone + NADPH + H(+). In Bacillus subtilis (strain 168), this protein is Glucose 1-dehydrogenase 2 (ycdF).